Consider the following 204-residue polypeptide: N-(5'-phosphoribosyl)anthranilate isomerase (204 aa).

The protein belongs to the TrpF family.

It carries out the reaction N-(5-phospho-beta-D-ribosyl)anthranilate = 1-(2-carboxyphenylamino)-1-deoxy-D-ribulose 5-phosphate. It functions in the pathway amino-acid biosynthesis; L-tryptophan biosynthesis; L-tryptophan from chorismate: step 3/5. The sequence is that of N-(5'-phosphoribosyl)anthranilate isomerase from Oceanobacillus iheyensis (strain DSM 14371 / CIP 107618 / JCM 11309 / KCTC 3954 / HTE831).